Here is a 408-residue protein sequence, read N- to C-terminus: D-galactonate dehydratase family member OG2516_05608 (408 aa).

D215 is a binding site for Mg(2+). Residue H217 coordinates D-arabinonate. Mg(2+) is bound by residues E241 and E267. 4 residues coordinate D-arabinonate: E267, R288, H317, and E344.

This sequence belongs to the mandelate racemase/muconate lactonizing enzyme family. GalD subfamily.

Has no detectable activity with D-mannonate and with a panel of 70 other acid sugars (in vitro), in spite of the conservation of the residues that are expected to be important for catalytic activity and cofactor binding. May have evolved a divergent function. The polypeptide is D-galactonate dehydratase family member OG2516_05608 (Oceanicola granulosus (strain ATCC BAA-861 / DSM 15982 / KCTC 12143 / HTCC2516)).